The following is a 506-amino-acid chain: Methylthioalkylmalate synthase 2, chloroplastic (506 aa).

Residues 1–49 (MASSLLTSSGMIPTTGSTVVGRSVLPFQSSLHSLRLTHSYKNPALFISC) constitute a chloroplast transit peptide. The 275-residue stretch at 85–359 (VRVFDTTLRD…YTRIDTRQIM (275 aa)) folds into the Pyruvate carboxyltransferase domain.

It belongs to the alpha-IPM synthase/homocitrate synthase family.

Its subcellular location is the plastid. It is found in the chloroplast. It carries out the reaction an omega-(methylsulfanyl)-2-oxoalkanoate + acetyl-CoA + H2O = a 2-(omega-methylsulfanyl)alkylmalate + CoA + H(+). Its function is as follows. Catalyzes only the first methionine chain elongation cycle. This chain is Methylthioalkylmalate synthase 2, chloroplastic (MAM2), found in Arabidopsis thaliana (Mouse-ear cress).